A 156-amino-acid chain; its full sequence is ATP synthase subunit b (156 aa).

Residues 11–31 (AIAFAIFVMFCMKFVWPPLIG) traverse the membrane as a helical segment.

It belongs to the ATPase B chain family. As to quaternary structure, F-type ATPases have 2 components, F(1) - the catalytic core - and F(0) - the membrane proton channel. F(1) has five subunits: alpha(3), beta(3), gamma(1), delta(1), epsilon(1). F(0) has three main subunits: a(1), b(2) and c(10-14). The alpha and beta chains form an alternating ring which encloses part of the gamma chain. F(1) is attached to F(0) by a central stalk formed by the gamma and epsilon chains, while a peripheral stalk is formed by the delta and b chains.

Its subcellular location is the cell inner membrane. Its function is as follows. F(1)F(0) ATP synthase produces ATP from ADP in the presence of a proton or sodium gradient. F-type ATPases consist of two structural domains, F(1) containing the extramembraneous catalytic core and F(0) containing the membrane proton channel, linked together by a central stalk and a peripheral stalk. During catalysis, ATP synthesis in the catalytic domain of F(1) is coupled via a rotary mechanism of the central stalk subunits to proton translocation. Functionally, component of the F(0) channel, it forms part of the peripheral stalk, linking F(1) to F(0). The polypeptide is ATP synthase subunit b (Psychrobacter cryohalolentis (strain ATCC BAA-1226 / DSM 17306 / VKM B-2378 / K5)).